The sequence spans 185 residues: UPF0301 protein Tbd_2579 (185 aa).

It belongs to the UPF0301 (AlgH) family.

This is UPF0301 protein Tbd_2579 from Thiobacillus denitrificans (strain ATCC 25259 / T1).